The chain runs to 365 residues: Flagellar P-ring protein (365 aa).

An N-terminal signal peptide occupies residues 1-19; it reads MIKFLSALILLLVTTAAQA.

Belongs to the FlgI family. In terms of assembly, the basal body constitutes a major portion of the flagellar organelle and consists of four rings (L,P,S, and M) mounted on a central rod.

It localises to the periplasm. The protein resides in the bacterial flagellum basal body. In terms of biological role, assembles around the rod to form the L-ring and probably protects the motor/basal body from shearing forces during rotation. The protein is Flagellar P-ring protein of Shigella dysenteriae serotype 1 (strain Sd197).